Consider the following 322-residue polypeptide: MARDKIALIGSGQIGGTLAHLIGLKELGDVVMFDIAEGVPQGKALDIAQSSPVDGFDAHYTGANSYEALDNAKVCIVTAGVPRKPGMSRDDLLSINLKVMEQVGAGIKKYAPDAFVICITNPLDAMVWALQKASGLPHKKVVGMAGVLDSARFRYFLADEFNVSVEDVTAFVLGGHGDTMVPLVKYSTVAGIPLPDLVKMGWTSQARLDEIVDRTRNGGAEIVNLLKTGSAFYAPAASAIAMAESYLRDKKRVLPSAAYLNGEYGVKDMYVGVPVVIGSKGVERVVEIELAGKDREAFDKSVGAVQGLVDACKKIAPDLLGR.

Residues 10-15 (GSGQIG) and D34 contribute to the NAD(+) site. The substrate site is built by R83 and R89. NAD(+)-binding positions include N96 and 119–121 (ITN). Residues N121 and R152 each contribute to the substrate site. The Proton acceptor role is filled by H176.

It belongs to the LDH/MDH superfamily. MDH type 3 family.

The catalysed reaction is (S)-malate + NAD(+) = oxaloacetate + NADH + H(+). Catalyzes the reversible oxidation of malate to oxaloacetate. This is Malate dehydrogenase from Bradyrhizobium diazoefficiens (strain JCM 10833 / BCRC 13528 / IAM 13628 / NBRC 14792 / USDA 110).